We begin with the raw amino-acid sequence, 57 residues long: UPF0391 membrane protein bsl5717 (57 aa).

The next 2 membrane-spanning stretches (helical) occupy residues 6-26 (WALIFLLVSIVAGVLGFTGIS) and 35-55 (FLFYVFVVIFLVLLILGLTIF).

The protein belongs to the UPF0391 family.

The protein resides in the cell membrane. The polypeptide is UPF0391 membrane protein bsl5717 (Bradyrhizobium diazoefficiens (strain JCM 10833 / BCRC 13528 / IAM 13628 / NBRC 14792 / USDA 110)).